Reading from the N-terminus, the 523-residue chain is Cytochrome P450 52A3-B (523 aa).

The helical transmembrane segment at 17 to 34 threads the bilayer; sequence WYTILFGAAFTYFLSIAL. Cysteine 471 provides a ligand contact to heme.

It belongs to the cytochrome P450 family. Heme serves as cofactor.

The protein localises to the membrane. Together with an NADPH cytochrome P450 the enzyme system catalyzes the terminal hydroxylation as the first step in the assimilation of alkanes and fatty acids. This chain is Cytochrome P450 52A3-B (CYP52A3-B), found in Candida maltosa (Yeast).